Here is a 329-residue protein sequence, read N- to C-terminus: Mas-related G-protein coupled receptor member X2 (329 aa).

The Extracellular segment spans residues 1–33 (MDPTTPAWRTESTTMNGNDQALPLLCGKEILIS). The chain crosses the membrane as a helical span at residues 34 to 54 (VFLILFIALVGLVGNGFVLWL). The Cytoplasmic segment spans residues 55–63 (LGFRMRRNA). Residues 64 to 84 (FSVYVLSLAGADFLFLCFQII) traverse the membrane as a helical segment. Residues 85–96 (NCLVYLSNFFCS) lie on the Extracellular side of the membrane. A helical transmembrane segment spans residues 97–117 (SSINFPSFFTTVMTCAYLAGL). At 118–144 (SMLSTISTERCLSVLWPIWYRCRRPRH) the chain is on the cytoplasmic side. The chain crosses the membrane as a helical span at residues 145 to 165 (LSAVACVLLWALSLLLSILEG). Residues 166–183 (KFCGLFGDGDSGWCQTFD) are Extracellular-facing. The chain crosses the membrane as a helical span at residues 184 to 204 (LITAAWLIFLFMVLCGSSLAL). Residues 205–227 (LVRILCGSRGLPLTRLYLTILLT) lie on the Cytoplasmic side of the membrane. The chain crosses the membrane as a helical span at residues 228–248 (VLVFLLCGLPFGIQWFLILWI). Residues 249–263 (WKNSDVLFCHIHPVS) are Extracellular-facing. A helical transmembrane segment spans residues 264–284 (VVLSSLNSSANPIIYFFVGSF). Residues 285–329 (RKQWQLQQPILKLALQRALQDIAEVDHSEGCFRQGTPEMSRSSLV) are Cytoplasmic-facing.

Belongs to the G-protein coupled receptor 1 family. Mas subfamily.

Its subcellular location is the cell membrane. In terms of biological role, mast cell-specific receptor for basic secretagogues, i.e. cationic amphiphilic drugs, as well as endo- or exogenous peptides, consisting of a basic head group and a hydrophobic core. Recognizes and binds small molecules containing a cyclized tetrahydroisoquinoline (THIQ), such as non-steroidal neuromuscular blocking drugs (NMBDs), including tubocurarine and atracurium. In response to these compounds, mediates pseudo-allergic reactions characterized by histamine release, inflammation and airway contraction. The protein is Mas-related G-protein coupled receptor member X2 (MRGPRX2) of Gorilla gorilla gorilla (Western lowland gorilla).